We begin with the raw amino-acid sequence, 316 residues long: Porphobilinogen deaminase (316 aa).

An S-(dipyrrolylmethanemethyl)cysteine modification is found at Cys-242.

Belongs to the HMBS family. Monomer. Requires dipyrromethane as cofactor.

It carries out the reaction 4 porphobilinogen + H2O = hydroxymethylbilane + 4 NH4(+). It participates in porphyrin-containing compound metabolism; protoporphyrin-IX biosynthesis; coproporphyrinogen-III from 5-aminolevulinate: step 2/4. Tetrapolymerization of the monopyrrole PBG into the hydroxymethylbilane pre-uroporphyrinogen in several discrete steps. The protein is Porphobilinogen deaminase of Thioalkalivibrio sulfidiphilus (strain HL-EbGR7).